Here is a 274-residue protein sequence, read N- to C-terminus: Cell division protein FtsQ (274 aa).

Residues 1-24 form a disordered region; that stretch reads MRDLHAKKQRVPHNRVKKPPKERK. Topologically, residues 1-33 are cytoplasmic; that stretch reads MRDLHAKKQRVPHNRVKKPPKERKPINWGPILK. A compositionally biased stretch (basic residues) spans 7–21; the sequence is KKQRVPHNRVKKPPK. The chain crosses the membrane as a helical span at residues 34–56; it reads FASRGFGGAALCAGLGFGGWQLY. Residues 57 to 274 lie on the Periplasmic side of the membrane; it reads NLVSRTTLLR…YADKIIVKKV (218 aa). One can recognise a POTRA domain in the interval 65–133; the sequence is LRLEAIEVSP…HTLSITVSER (69 aa).

Belongs to the FtsQ/DivIB family. FtsQ subfamily.

The protein resides in the cell inner membrane. Its function is as follows. Essential cell division protein. This Geobacter sp. (strain M21) protein is Cell division protein FtsQ.